A 940-amino-acid chain; its full sequence is MLMMFSPAFVMVMDLMVLVMMIMMMVSSLDAHGHISCIESERKGLLELKAYLNISEYPYDWPNDTNNSDCCKWERVKCDLTSGRVIGLLLTDTYYPPPLLNLSLFYPFGELQTLNLSNFWCQGWFDHIHGYKSFERLKNLEILDISENGVNNTVLPFINTASSLKTLILHGNNMEGTFPMKELINLRNLELLDLSKNQFVGPVPDLANFHNLQGLDMSDNKFSGSNKGLCQLKNLRELDLSQNKFTGQFPQCFDSLTQLQVLDISSNNFNGTVPSLIRNLDSVEYLALSDNEFKGFFSLELIANLSKLKVFKLSSRSNLLRLKKLSSLQPKFQLSVIELQNCNLENVPSFIQHQKDLHVINLSNNKLTGVFPYWLLEKYPNLRVLLLQNNSLTMLELPRLLNHTLQILDLSANNFDQRLPENIGKVLPNIRHLNLSNNGFQWILPSSFGEMKDIKFLDLSHNNFSGSLPMKFLIGCSSLHTLKLSYNKFFGQIFPKQTNFGSLVVLIANNNLFTGIADGLRNVQSLGVLDLSNNYLQGVIPSWFGGFFFAYLFLSNNLLEGTLPSTLFSKPTFKILDLSGNKFSGNLPSHFTGMDMSLLYLNDNEFSGTIPSTLIKDVLVLDLRNNKLSGTIPHFVKNEFILSLLLRGNTLTGHIPTDLCGLRSIRILDLANNRLKGSIPTCLNNVSFGRRLNYEVNGDKLPFEINDDEEFAVYSRLLVLPRQYSPDYTGVLMFNVEFASKSRYDSYTQESFNFMFGLDLSSNELSGDIPKELGDLQRIRALNLSHNSLSGLIPQSFSNLTDIESIDLSFNLLRGPIPQDLSKLDYMVVFNVSYNNLSGSIPSHGKFSTLDETNFIGNLLLCGSAINRSCDDNSTTEFLESDDQSGDEETTIDMEIFYWSLAATYGVTWITFIVFLCFDSPWRRVWFHFVDAFISLFKCV.

Residues 1–28 (MLMMFSPAFVMVMDLMVLVMMIMMMVSS) form the signal peptide. The Extracellular portion of the chain corresponds to 29 to 895 (LDAHGHISCI…GDEETTIDME (867 aa)). Residues asparagine 53, asparagine 63, asparagine 66, asparagine 101, asparagine 115, and asparagine 151 are each glycosylated (N-linked (GlcNAc...) asparagine). LRR repeat units lie at residues 108–136 (FGEL…SFER), 137–163 (LKNL…TASS), 165–185 (KTLI…ELIN), 186–211 (LRNL…NFHN), 213–232 (QGLD…LCQL), 233–255 (KNLR…CFDS), 257–279 (TQLQ…LIRN), 281–304 (DSVE…LIAN), 306–330 (SKLK…SLQP), 331–354 (KFQL…IQHQ), 355–378 (KDLH…LLEK), 379–402 (YPNL…RLLN), 403–426 (HTLQ…IGKV), 427–450 (LPNI…SFGE), 452–475 (KDIK…FLIG), and 477–502 (SSLH…NFGS). N-linked (GlcNAc...) asparagine glycosylation is found at asparagine 270 and asparagine 304. N-linked (GlcNAc...) asparagine glycosylation is found at asparagine 361, asparagine 389, and asparagine 402. Residues asparagine 434 and asparagine 463 are each glycosylated (N-linked (GlcNAc...) asparagine). One copy of the LRR 17; degenerate repeat lies at 503 to 522 (LVVLIANNNLFTGIADGLRN). 11 LRR repeats span residues 523–546 (VQSL…WFGG), 547–570 (FFFA…LFSK), 571–593 (PTFK…HFTG), 595–615 (DMSL…STLI), 616–639 (KDVL…VKNE), 641–662 (ILSL…LCGL), 663–686 (RSIR…LNNV), 752–776 (FNFM…LGDL), 777–799 (QRIR…SFSN), 801–824 (TDIE…LSKL), and 826–849 (YMVV…KFST). A glycan (N-linked (GlcNAc...) asparagine) is linked at asparagine 685. Residues asparagine 783 and asparagine 799 are each glycosylated (N-linked (GlcNAc...) asparagine). Asparagine 831, asparagine 836, asparagine 867, and asparagine 873 each carry an N-linked (GlcNAc...) asparagine glycan. The helical transmembrane segment at 896–916 (IFYWSLAATYGVTWITFIVFL) threads the bilayer. The Cytoplasmic segment spans residues 917-940 (CFDSPWRRVWFHFVDAFISLFKCV).

Belongs to the RLP family.

Its subcellular location is the cell membrane. The sequence is that of Receptor-like protein 9b from Arabidopsis thaliana (Mouse-ear cress).